A 344-amino-acid polypeptide reads, in one-letter code: Lipase chaperone (344 aa).

Residues A14–A34 traverse the membrane as a helical segment.

This sequence belongs to the lipase chaperone family.

The protein localises to the cell inner membrane. In terms of biological role, may be involved in the folding of the extracellular lipase during its passage through the periplasm. This is Lipase chaperone from Burkholderia lata (strain ATCC 17760 / DSM 23089 / LMG 22485 / NCIMB 9086 / R18194 / 383).